The primary structure comprises 213 residues: Glycerol-3-phosphate acyltransferase (213 aa).

Helical transmembrane passes span 3–23, 68–88, 112–132, 134–154, and 163–183; these read LLLFITIAYLLGSIPTGLWIG, ILLPIIFGMTSISSIAIGFFA, VLLGFAPLYLFFLASIFVLVL, LFSMISLASVVSAIVGVLSVL, and LPNYDYFLTFIVILLAFIIII.

The protein belongs to the PlsY family. In terms of assembly, probably interacts with PlsX.

The protein resides in the cell membrane. The enzyme catalyses an acyl phosphate + sn-glycerol 3-phosphate = a 1-acyl-sn-glycero-3-phosphate + phosphate. The protein operates within lipid metabolism; phospholipid metabolism. Functionally, catalyzes the transfer of an acyl group from acyl-phosphate (acyl-PO(4)) to glycerol-3-phosphate (G3P) to form lysophosphatidic acid (LPA). This enzyme utilizes acyl-phosphate as fatty acyl donor, but not acyl-CoA or acyl-ACP. This Streptococcus pyogenes serotype M28 (strain MGAS6180) protein is Glycerol-3-phosphate acyltransferase.